A 101-amino-acid chain; its full sequence is Small ribosomal subunit protein bS16 (101 aa).

It belongs to the bacterial ribosomal protein bS16 family.

The protein is Small ribosomal subunit protein bS16 of Ureaplasma parvum serovar 3 (strain ATCC 700970).